We begin with the raw amino-acid sequence, 380 residues long: Chaperone protein DnaJ (380 aa).

The J domain occupies D5–G70. A CR-type zinc finger spans residues G139–S217. Zn(2+) contacts are provided by C152, C155, C169, C172, C191, C194, C205, and C208. CXXCXGXG motif repeat units follow at residues C152 to G159, C169 to G176, C191 to G198, and C205 to G212. The disordered stretch occupies residues V224 to Q245.

The protein belongs to the DnaJ family. Homodimer. The cofactor is Zn(2+).

Its subcellular location is the cytoplasm. Its function is as follows. Participates actively in the response to hyperosmotic and heat shock by preventing the aggregation of stress-denatured proteins and by disaggregating proteins, also in an autonomous, DnaK-independent fashion. Unfolded proteins bind initially to DnaJ; upon interaction with the DnaJ-bound protein, DnaK hydrolyzes its bound ATP, resulting in the formation of a stable complex. GrpE releases ADP from DnaK; ATP binding to DnaK triggers the release of the substrate protein, thus completing the reaction cycle. Several rounds of ATP-dependent interactions between DnaJ, DnaK and GrpE are required for fully efficient folding. Also involved, together with DnaK and GrpE, in the DNA replication of plasmids through activation of initiation proteins. This Pseudomonas syringae pv. syringae (strain B728a) protein is Chaperone protein DnaJ.